The primary structure comprises 58 residues: UPF0339 protein TDE_0826 (58 aa).

Belongs to the UPF0339 family.

The sequence is that of UPF0339 protein TDE_0826 from Treponema denticola (strain ATCC 35405 / DSM 14222 / CIP 103919 / JCM 8153 / KCTC 15104).